A 405-amino-acid polypeptide reads, in one-letter code: Tryptophan synthase beta chain (405 aa).

Position 98 is an N6-(pyridoxal phosphate)lysine (Lys-98).

Belongs to the TrpB family. In terms of assembly, tetramer of two alpha and two beta chains. Pyridoxal 5'-phosphate serves as cofactor.

The enzyme catalyses (1S,2R)-1-C-(indol-3-yl)glycerol 3-phosphate + L-serine = D-glyceraldehyde 3-phosphate + L-tryptophan + H2O. The protein operates within amino-acid biosynthesis; L-tryptophan biosynthesis; L-tryptophan from chorismate: step 5/5. Its function is as follows. The beta subunit is responsible for the synthesis of L-tryptophan from indole and L-serine. This Xanthomonas oryzae pv. oryzae (strain PXO99A) protein is Tryptophan synthase beta chain.